We begin with the raw amino-acid sequence, 1001 residues long: X-linked retinitis pigmentosa GTPase regulator (1001 aa).

RCC1 repeat units lie at residues 54 to 105 (NKLY…STDT), 106 to 158 (GGVY…LTED), 159 to 208 (GKLF…VTMD), 209 to 261 (GELY…LTEK), 262 to 313 (VVYA…MTEL), and 314 to 367 (GLLY…FATP). Residues 404 to 428 (SLSARLRRRERERPPCSASMVGTLP) form a disordered region. Ser-518 bears the Phosphoserine mark. Composition is skewed to basic and acidic residues over residues 631–641 (KKIRESEENSK) and 659–671 (EDNKDIAEERRSS). Disordered regions lie at residues 631–738 (KKIR…WYDR), 794–869 (NLEF…EGSE), 902–925 (PKGHMYDRVKSSSSEILGGNDPTS), and 962–1001 (GDQIALQSDKKDANQNHMGQNLQDSTTPNMEGKSKSCTIL). Composition is skewed to acidic residues over residues 679 to 691 (SETELVEEPDSYM) and 717 to 731 (EKDEKDEKDDDEVET). Basic and acidic residues-rich tracts occupy residues 794 to 818 (NLEFEGDRKEAKAEAPSDVITEKEA), 847 to 857 (EERKEGEKEIV), and 902 to 911 (PKGHMYDRVK). Residues 976–1001 (QNHMGQNLQDSTTPNMEGKSKSCTIL) show a composition bias toward polar residues. Cys-998 carries the post-translational modification Cysteine methyl ester. Cys-998 is lipidated: S-geranylgeranyl cysteine. Positions 999–1001 (TIL) are cleaved as a propeptide — removed in mature form.

Interacts with SPATA7. Interacts with PDE6D. Interacts with RPGRIP1 and RPGRIP1L; PDE6D, RPGRIP1 and RPGRIP1L may compete for the same binding sites. Interacts with NPM1. Interacts with PDE6D. Isoform 5 interacts (via N-terminus) with SMC1A and SMC3. Isoform 5 interacts with CEP290. Interacts with WHRN. Interacts with RAB37 and RAB8A (in GDP-bound forms); functions as GEF for RAB37 and RAB8A. Post-translationally, prenylated. Expressed in the retina (at protein level). Located mainly in the connecting cilia between the outer segment and inner segment and also observed in the outer plexiform layer, inner plexiform layer, and ganglion cell layer of the retinas. Isoform 1: Expressed in the retina (at protein level). Isoform 5: Expressed in the retina (at protein level). Expressed in the brain. Expressed in the testis (at protein level). Expressed in kidney (at protein level).

Its subcellular location is the golgi apparatus. The protein resides in the cytoplasm. The protein localises to the cytoskeleton. It localises to the microtubule organizing center. It is found in the centrosome. Its subcellular location is the cell projection. The protein resides in the cilium. The protein localises to the cilium basal body. It localises to the cilium axoneme. It is found in the flagellum axoneme. Functionally, acts as a guanine-nucleotide releasing factor (GEF) for RAB8A and RAB37 by promoting the conversion of inactive RAB-GDP to the active form RAB-GTP. GEF activity towards RAB8A may facilitate ciliary trafficking by modulating ciliary intracellular localization of RAB8A. GEF activity towards RAB37 maintains autophagic homeostasis and retinal function. Involved in photoreceptor integrity. May control cilia formation by regulating actin stress filaments and cell contractility. May be involved in microtubule organization and regulation of transport in primary cilia. Isoform 5 may play a critical role in spermatogenesis and in intraflagellar transport processes. In Mus musculus (Mouse), this protein is X-linked retinitis pigmentosa GTPase regulator.